The primary structure comprises 318 residues: MQLEFLGTGSGQPSKFRNVTSIALRLLDERNAVWLFDVGEATQHQILKTTLRPRKVEKIFITHLHGDHIFGLPGFLSSRSFQGADKNEPLTIYGPKGVKEFVQTALRISETRLSYPIEYVDLTEGVIFEDHTFQVVAAPMRHRIETWGFRVIEKDHPGELLVDKLKQGNIPSGPVYGQLKAGKTVTLPDGRIVNGHDFIGKAQKGRIVTFILDTRPNDNVEWLAKNADVLVHESTYGSSEEEAKMAKAHAHSTSANAASVARRAHVNKLVLTHLSARYIGPMVKELIHDVRRNFANTYVARDFDIIDIPFKKDSNESK.

Zn(2+) contacts are provided by histidine 63, histidine 65, aspartate 67, histidine 68, histidine 142, aspartate 213, and histidine 273. Aspartate 67 functions as the Proton acceptor in the catalytic mechanism.

The protein belongs to the RNase Z family. As to quaternary structure, homodimer. Requires Zn(2+) as cofactor.

The enzyme catalyses Endonucleolytic cleavage of RNA, removing extra 3' nucleotides from tRNA precursor, generating 3' termini of tRNAs. A 3'-hydroxy group is left at the tRNA terminus and a 5'-phosphoryl group is left at the trailer molecule.. Zinc phosphodiesterase, which displays some tRNA 3'-processing endonuclease activity. Probably involved in tRNA maturation, by removing a 3'-trailer from precursor tRNA. The protein is Ribonuclease Z of Leuconostoc mesenteroides subsp. mesenteroides (strain ATCC 8293 / DSM 20343 / BCRC 11652 / CCM 1803 / JCM 6124 / NCDO 523 / NBRC 100496 / NCIMB 8023 / NCTC 12954 / NRRL B-1118 / 37Y).